The following is a 179-amino-acid chain: Large ribosomal subunit protein uL5 (179 aa).

Belongs to the universal ribosomal protein uL5 family. Part of the 50S ribosomal subunit; part of the 5S rRNA/L5/L18/L25 subcomplex. Contacts the 5S rRNA and the P site tRNA. Forms a bridge to the 30S subunit in the 70S ribosome.

In terms of biological role, this is one of the proteins that bind and probably mediate the attachment of the 5S RNA into the large ribosomal subunit, where it forms part of the central protuberance. In the 70S ribosome it contacts protein S13 of the 30S subunit (bridge B1b), connecting the 2 subunits; this bridge is implicated in subunit movement. Contacts the P site tRNA; the 5S rRNA and some of its associated proteins might help stabilize positioning of ribosome-bound tRNAs. This chain is Large ribosomal subunit protein uL5, found in Prochlorococcus marinus (strain AS9601).